The following is a 347-amino-acid chain: Doublecortin domain-containing protein 2C (347 aa).

2 Doublecortin domains span residues 16–98 and 136–217; these read KTIL…LDYI and RYIN…IPYW. The segment at 235-260 is disordered; that stretch reads KYTQTKKRVESKVKEPLQNDSVPPRS. Residues 241–251 are compositionally biased toward basic and acidic residues; that stretch reads KRVESKVKEPL.

It localises to the cell projection. Its subcellular location is the cilium. The protein resides in the flagellum. The protein localises to the cytoplasm. The chain is Doublecortin domain-containing protein 2C from Mus musculus (Mouse).